Here is a 428-residue protein sequence, read N- to C-terminus: MSVTVIVGAQWGDEGKGKITDYLAERSEVVVRYQGGNNAGHTVEKDGVQYKLHLIPSGILYPDKICVIGNGVVVDPSALLKEIEDLKAKGVEVKEDNLKISDRAHVVFPYHIKEDELEEKGKGDEDLGTTKKGIGPCYRDKTERIGIRMCDLMNAEVFREKLKKNLERKNKIFKDIYGEDGFDFEQIFETYREYAERLRPYVTDTSVLLYNLAKEGKKILFEGAQGTLLDLDFGTYPYVTASHPVAGGATIGAGIGPTMIDNVIGVVKAYTTRVGKGPFPTELKDEIGDFLREKGYEYGTTTGRPRRCGWIDIVMLRYAVRVSGITSLALTKLDTLTGLEKIKICTGYKINGKIIEDFPASLEELKMCEPIYEEMEGWSENIQDVRSFEDLPLNAKKYVKRLEELVGVEFSIISVGPEREETIVLRNF.

Residues 12–18 (GDEGKGK) and 40–42 (GHT) contribute to the GTP site. Asp-13 functions as the Proton acceptor in the catalytic mechanism. 2 residues coordinate Mg(2+): Asp-13 and Gly-40. Residues 13 to 16 (DEGK), 38 to 41 (NAGH), Thr-130, Arg-144, Gln-225, Thr-240, and Arg-304 each bind IMP. The active-site Proton donor is His-41. 300 to 306 (TTTGRPR) lines the substrate pocket. GTP-binding positions include Arg-306, 332–334 (KLD), and 414–416 (SVG).

It belongs to the adenylosuccinate synthetase family. Homodimer. Requires Mg(2+) as cofactor.

It is found in the cytoplasm. It carries out the reaction IMP + L-aspartate + GTP = N(6)-(1,2-dicarboxyethyl)-AMP + GDP + phosphate + 2 H(+). It functions in the pathway purine metabolism; AMP biosynthesis via de novo pathway; AMP from IMP: step 1/2. Its function is as follows. Plays an important role in the de novo pathway of purine nucleotide biosynthesis. Catalyzes the first committed step in the biosynthesis of AMP from IMP. The polypeptide is Adenylosuccinate synthetase (Caldanaerobacter subterraneus subsp. tengcongensis (strain DSM 15242 / JCM 11007 / NBRC 100824 / MB4) (Thermoanaerobacter tengcongensis)).